Here is a 954-residue protein sequence, read N- to C-terminus: SWI/SNF-related matrix-associated actin-dependent regulator of chromatin subfamily A-like protein 1 (954 aa).

2 disordered regions span residues 1-20 and 27-238; these read MSLPLTEEQRKKIEENRQKA and KLLA…NSQK. Position 2 is an N-acetylserine (Ser2). Positions 3–34 form a coiled coil; it reads LPLTEEQRKKIEENRQKALARRAEKLLAEQHQ. Residues 5-30 form a mediates interaction with RPA2 region; it reads LTEEQRKKIEENRQKALARRAEKLLA. The segment covering 7–20 has biased composition (basic and acidic residues); it reads EEQRKKIEENRQKA. Residues 72–83 show a composition bias toward polar residues; that stretch reads KQQNLSSSSNAD. Ser112, Ser123, Ser129, and Ser151 each carry phosphoserine. Composition is skewed to polar residues over residues 171–183 and 197–238; these read KSSQETPAHSSGQ and ASPS…NSQK. Ser198 bears the Phosphoserine mark. HARP domains lie at 226–303 and 327–398; these read SGSS…QPLE and SLSF…DPLP. Residues 445-600 form the Helicase ATP-binding domain; the sequence is NFAIAKGGRL…YTQIIAVKPT (156 aa). Position 458-465 (458-465) interacts with ATP; it reads DDMGLGKT. Residues 549–552 carry the DESH box motif; that stretch reads DESH. A Nuclear localization signal motif is present at residues 644-661; the sequence is RRLKSDVLSQLPAKQRKI. The region spanning 716 to 869 is the Helicase C-terminal domain; the sequence is YILDLLESGR…ETNFSEMTES (154 aa). The disordered stretch occupies residues 904-934; sequence ESFDPGSASGTSGSSSQNMGDTLDESSLTAS. Over residues 909-919 the composition is skewed to low complexity; the sequence is GSASGTSGSSS. Residues 920–934 are compositionally biased toward polar residues; it reads QNMGDTLDESSLTAS.

This sequence belongs to the SNF2/RAD54 helicase family. SMARCAL1 subfamily. Interacts with RPA2; the interaction is direct and mediates the recruitment by the RPA complex of SMARCAL1 to sites of DNA damage. In terms of processing, DNA damage-regulated phosphorylation by kinases that may include ATM, ATR and PRKDC. Ubiquitously expressed, with high levels in testis.

The protein localises to the nucleus. It carries out the reaction ATP + H2O = ADP + phosphate + H(+). ATP-dependent annealing helicase that binds selectively to fork DNA relative to ssDNA or dsDNA and catalyzes the rewinding of the stably unwound DNA. Rewinds single-stranded DNA bubbles that are stably bound by replication protein A (RPA). Acts throughout the genome to reanneal stably unwound DNA, performing the opposite reaction of many enzymes, such as helicases and polymerases, that unwind DNA. May play an important role in DNA damage response by acting at stalled replication forks. This Homo sapiens (Human) protein is SWI/SNF-related matrix-associated actin-dependent regulator of chromatin subfamily A-like protein 1.